A 199-amino-acid polypeptide reads, in one-letter code: Chaperone protein TorD (199 aa).

The protein belongs to the TorD/DmsD family. TorD subfamily.

It localises to the cytoplasm. Functionally, involved in the biogenesis of TorA. Acts on TorA before the insertion of the molybdenum cofactor and, as a result, probably favors a conformation of the apoenzyme that is competent for acquiring the cofactor. In Escherichia coli (strain K12 / MC4100 / BW2952), this protein is Chaperone protein TorD.